The sequence spans 224 residues: UPF0758 protein Tbd_2588 (224 aa).

The region spanning alanine 102–leucine 224 is the MPN domain. Residues histidine 173, histidine 175, and aspartate 186 each coordinate Zn(2+). The short motif at histidine 173–aspartate 186 is the JAMM motif element.

Belongs to the UPF0758 family.

The chain is UPF0758 protein Tbd_2588 from Thiobacillus denitrificans (strain ATCC 25259 / T1).